A 130-amino-acid polypeptide reads, in one-letter code: MSVVRSSVHAKWIVGKVIGTAMQKTAKVRVTRLVLDPYLLKYFNKRKTYFAHDALQQCTVGDIVLLKALPVPRTKHVKHELAEIVFKVGQVVDPVTGKRCAGTTYLESPVDLETTPLAKNLEELSLSTTQ.

It belongs to the universal ribosomal protein uS17 family. As to quaternary structure, component of the mitochondrial ribosome small subunit (28S) which comprises a 12S rRNA and about 30 distinct proteins.

The protein localises to the mitochondrion. The polypeptide is Small ribosomal subunit protein uS17m (MRPS17) (Bos taurus (Bovine)).